A 200-amino-acid polypeptide reads, in one-letter code: Nucleoside triphosphate pyrophosphatase (200 aa).

The active-site Proton acceptor is aspartate 79.

Belongs to the Maf family. A divalent metal cation serves as cofactor.

Its subcellular location is the cytoplasm. It catalyses the reaction a ribonucleoside 5'-triphosphate + H2O = a ribonucleoside 5'-phosphate + diphosphate + H(+). The enzyme catalyses a 2'-deoxyribonucleoside 5'-triphosphate + H2O = a 2'-deoxyribonucleoside 5'-phosphate + diphosphate + H(+). Its function is as follows. Nucleoside triphosphate pyrophosphatase. May have a dual role in cell division arrest and in preventing the incorporation of modified nucleotides into cellular nucleic acids. The protein is Nucleoside triphosphate pyrophosphatase of Legionella pneumophila subsp. pneumophila (strain Philadelphia 1 / ATCC 33152 / DSM 7513).